Here is a 349-residue protein sequence, read N- to C-terminus: tRNA pseudouridine synthase D (349 aa).

Phenylalanine 27 lines the substrate pocket. Residue aspartate 80 is the Nucleophile of the active site. Substrate is bound at residue asparagine 129. Residues 155–303 form the TRUD domain; that stretch reads GVPNYFGAQR…VEAARRAMLL (149 aa). Phenylalanine 329 contributes to the substrate binding site.

The protein belongs to the pseudouridine synthase TruD family.

It catalyses the reaction uridine(13) in tRNA = pseudouridine(13) in tRNA. Its function is as follows. Responsible for synthesis of pseudouridine from uracil-13 in transfer RNAs. This is tRNA pseudouridine synthase D from Escherichia coli O6:K15:H31 (strain 536 / UPEC).